The chain runs to 345 residues: Ferrochelatase (345 aa).

The Fe cation site is built by H215 and E296.

This sequence belongs to the ferrochelatase family.

It localises to the cytoplasm. The catalysed reaction is heme b + 2 H(+) = protoporphyrin IX + Fe(2+). Its pathway is porphyrin-containing compound metabolism; protoheme biosynthesis; protoheme from protoporphyrin-IX: step 1/1. Its function is as follows. Catalyzes the ferrous insertion into protoporphyrin IX. This is Ferrochelatase from Rhodopseudomonas palustris (strain TIE-1).